A 108-amino-acid polypeptide reads, in one-letter code: Histone H4 (108 aa).

The disordered stretch occupies residues 1–24 (MTGRGKGGKVLSLGGKGGKGAKRH). Residues 17 to 21 (GGKGA) mediate DNA binding.

Belongs to the histone H4 family. The nucleosome is a histone octamer containing two molecules each of H2A, H2B, H3 and H4 assembled in one H3-H4 heterotetramer and two H2A-H2B heterodimers. The octamer wraps approximately 147 bp of DNA.

It is found in the nucleus. The protein localises to the chromosome. Core component of nucleosome. Nucleosomes wrap and compact DNA into chromatin, limiting DNA accessibility to the cellular machineries which require DNA as a template. Histones thereby play a central role in transcription regulation, DNA repair, DNA replication and chromosomal stability. DNA accessibility is regulated via a complex set of post-translational modifications of histones, also called histone code, and nucleosome remodeling. The chain is Histone H4 from Mastigamoeba balamuthi (Phreatamoeba balamuthi).